The sequence spans 288 residues: Carbon monoxide dehydrogenase medium chain (288 aa).

The 177-residue stretch at 1–177 (MIPGSFDYHR…TAIRIPVPPT (177 aa)) folds into the FAD-binding PCMH-type domain. FAD contacts are provided by residues 32–36 (AGGHS) and 111–115 (TIGGN).

As to quaternary structure, dimer of heterotrimers. Each heterotrimer consists of a large, a medium and a small subunit. FAD serves as cofactor.

The catalysed reaction is CO + a quinone + H2O = a quinol + CO2. Catalyzes the oxidation of carbon monoxide to carbon dioxide. This is Carbon monoxide dehydrogenase medium chain (coxM) from Afipia carboxidovorans (strain ATCC 49405 / DSM 1227 / KCTC 32145 / OM5) (Oligotropha carboxidovorans).